The primary structure comprises 103 residues: CLAVATA3/ESR (CLE)-related protein 22 (103 aa).

Positions 1 to 34 (MGNYYSRRKSRKHITTVALIILLLLLFLFLYAKA) are cleaved as a signal peptide. Residues 37-103 (SSPNIHHHST…FTGPNPLHNR (67 aa)) are disordered. Residues 41-50 (IHHHSTHGSL) show a composition bias toward basic residues. The segment covering 66–76 (NAASSRGSKYT) has biased composition (polar residues). Hydroxyproline is present on Pro-97. Pro-97 carries an O-linked (Ara...) hydroxyproline glycan.

This sequence belongs to the CLV3/ESR signal peptide family. In terms of processing, the O-glycosylation (arabinosylation) of the hydroxyproline Pro-97 enhances binding affinity of the CLE22p peptide for its receptor. As to expression, mostly expressed in stems and apex, and, to a lower extent, in seedlings, leaves, flowers and siliques.

Its subcellular location is the secreted. The protein resides in the extracellular space. Functionally, extracellular signal peptide that regulates cell fate. Represses root apical meristem maintenance. This is CLAVATA3/ESR (CLE)-related protein 22 from Arabidopsis thaliana (Mouse-ear cress).